The chain runs to 367 residues: Sigma54-dependent transcriptional regulator SfnR (367 aa).

A Sigma-54 factor interaction domain is found at 21-250 (QVFEDPKSQA…LENVIHHTLL (230 aa)). ATP contacts are provided by residues 49–56 (GETGTGKE) and 112–121 (ADGGTLFLDE).

Its function is as follows. Involved in the dimethyl sulfide degradation pathway. Activates the expression of sfnG and sfnF. The polypeptide is Sigma54-dependent transcriptional regulator SfnR (Pseudomonas fluorescens (strain Pf0-1)).